A 321-amino-acid chain; its full sequence is MEEGQYSEIEELPRRRCCRRGTQIVLLGLVTAALWAGLLTLLLLWHWDTTQSLKQLEERAARNVSQVSKNLESHHGDQMAQKSQSTQISQELEELRAEQQRLKSQDLELSWNLNGLQADLSSFKSQELNERNEASDLLERLREEVTKLRMELQVSSGFVCNTCPEKWINFQRKCYYFGKGTKQWVHARYACDDMEGQLVSIHSPEEQDFLTKHASHTGSWIGLRNLDLKGEFIWVDGSHVDYSNWAPGEPTSRSQGEDCVMMRGSGRWNDAFCDRKLGAWVCDRLATCTPPASEGSAESMGPDSRPDPDGRLPTPSAPLHS.

Over 1–21 (MEEGQYSEIEELPRRRCCRRG) the chain is Cytoplasmic. Residues cysteine 17 and cysteine 18 are each lipidated (S-palmitoyl cysteine). Residues 22–47 (TQIVLLGLVTAALWAGLLTLLLLWHW) form a helical; Signal-anchor for type II membrane protein membrane-spanning segment. The Extracellular portion of the chain corresponds to 48–321 (DTTQSLKQLE…LPTPSAPLHS (274 aa)). Asparagine 63 carries N-linked (GlcNAc...) asparagine glycosylation. Residues 66 to 85 (QVSKNLESHHGDQMAQKSQS) are disordered. Repeats lie at residues 69 to 89 (KNLE…TQIS), 90 to 110 (QELE…LELS), and 111 to 131 (WNLN…LNER). Intrachain disulfides connect cysteine 160–cysteine 288, cysteine 163–cysteine 174, cysteine 191–cysteine 282, and cysteine 259–cysteine 273. The 123-residue stretch at 162–284 (TCPEKWINFQ…RKLGAWVCDR (123 aa)) folds into the C-type lectin domain. Ca(2+) is bound by residues glutamate 249, threonine 251, asparagine 269, and aspartate 270. The interval 290–321 (PPASEGSAESMGPDSRPDPDGRLPTPSAPLHS) is disordered. O-linked (Xyl...) (chondroitin sulfate) serine glycosylation occurs at serine 296.

In terms of assembly, homotrimer. Interacts (via C-type lectin domain) with IGHE (via CH3 region); this interaction regulates IgE homeostasis. Interacts (via the C-terminus) with CR2/CD21 (via Sushi domain 1 and 2). N- and O-glycosylated. In terms of processing, the secreted form sCD23 is produced by ADAM10-mediated ectodomain shedding. Detected in urine (at protein level).

Its subcellular location is the cell membrane. It localises to the secreted. Its function is as follows. Low-affinity receptor for immunoglobulin E (IgE) and CR2/CD21. Has essential roles in the regulation of IgE production and in the differentiation of B cells. On B cells, initiates IgE-dependent antigen uptake and presentation to T cells. On macrophages, upon IgE binding and antigen cross-linking induces intracellular killing of parasites through activation of L-Arginine-nitric oxide pathway. The chain is Low affinity immunoglobulin epsilon Fc receptor (FCER2) from Homo sapiens (Human).